The primary structure comprises 268 residues: Undecaprenyl-diphosphatase (268 aa).

7 helical membrane-spanning segments follow: residues 43 to 63, 85 to 105, 108 to 128, 141 to 161, 184 to 204, 217 to 237, and 246 to 266; these read FWKTFAVLIQLGAILAILAIY, IGVLVAFLPAVILGLIFGTFI, VLFNPWVVCFSLIAGGAVLLW, AMAFPLPMYLGIGIAQCAAMV, AAEFSFFLAIPTMLGAFVYDV, FIIIVGFVVSFITAIVVVKTF, and FTFFAWWRVIVGTLGLIALAL.

It belongs to the UppP family.

The protein localises to the cell inner membrane. It catalyses the reaction di-trans,octa-cis-undecaprenyl diphosphate + H2O = di-trans,octa-cis-undecaprenyl phosphate + phosphate + H(+). Catalyzes the dephosphorylation of undecaprenyl diphosphate (UPP). Confers resistance to bacitracin. The chain is Undecaprenyl-diphosphatase from Afipia carboxidovorans (strain ATCC 49405 / DSM 1227 / KCTC 32145 / OM5) (Oligotropha carboxidovorans).